A 197-amino-acid polypeptide reads, in one-letter code: Xanthine phosphoribosyltransferase (197 aa).

Xanthine-binding residues include L20 and N27. A128 to A132 is a 5-phospho-alpha-D-ribose 1-diphosphate binding site. K156 contacts xanthine.

The protein belongs to the purine/pyrimidine phosphoribosyltransferase family. Xpt subfamily. Homodimer.

The protein localises to the cytoplasm. It catalyses the reaction XMP + diphosphate = xanthine + 5-phospho-alpha-D-ribose 1-diphosphate. It functions in the pathway purine metabolism; XMP biosynthesis via salvage pathway; XMP from xanthine: step 1/1. In terms of biological role, converts the preformed base xanthine, a product of nucleic acid breakdown, to xanthosine 5'-monophosphate (XMP), so it can be reused for RNA or DNA synthesis. The protein is Xanthine phosphoribosyltransferase of Bacillus thuringiensis (strain Al Hakam).